The sequence spans 1375 residues: DNA-directed RNA polymerase subunit beta (1375 aa).

The protein belongs to the RNA polymerase beta chain family. In terms of assembly, the RNAP catalytic core consists of 2 alpha, 1 beta, 1 beta' and 1 omega subunit. When a sigma factor is associated with the core the holoenzyme is formed, which can initiate transcription.

It carries out the reaction RNA(n) + a ribonucleoside 5'-triphosphate = RNA(n+1) + diphosphate. DNA-dependent RNA polymerase catalyzes the transcription of DNA into RNA using the four ribonucleoside triphosphates as substrates. This is DNA-directed RNA polymerase subunit beta from Malacoplasma penetrans (strain HF-2) (Mycoplasma penetrans).